A 1242-amino-acid polypeptide reads, in one-letter code: Phosphorylase b kinase regulatory subunit alpha, skeletal muscle isoform (1242 aa).

Residues serine 630, serine 731, serine 737, serine 740, serine 760, serine 813, serine 974, serine 983, and serine 987 each carry the phosphoserine modification. A calmodulin-binding region spans residues 812 to 842 (LSELYVKVGEIRHWGLIRYISGILRKKVEAL). Serine 1009 bears the Phosphoserine; by autocatalysis mark. Serine 1020 is subject to Phosphoserine; by PKA. Residues serine 1022 and serine 1025 each carry the phosphoserine modification. Residues 1065–1105 (SKDSRQGQWQRRRRLDGALNRVPIGFYQKVWKILQKCHGLS) form a calmodulin-binding region. Residue serine 1132 is modified to Phosphoserine. A lipid anchor (S-farnesyl cysteine) is attached at cysteine 1239.

The protein belongs to the phosphorylase b kinase regulatory chain family. In terms of assembly, hexadecamer of 4 heterotetramers, each composed of alpha, beta, gamma, and delta subunits. Alpha (PHKA1 or PHKA2) and beta (PHKB) are regulatory subunits, gamma (PHKG1 or PHKG2) is the catalytic subunit, and delta is calmodulin. Although the final Cys may be farnesylated, the terminal tripeptide is probably not removed, and the C-terminus is not methylated.

It is found in the cell membrane. It functions in the pathway glycan biosynthesis; glycogen metabolism. Its activity is regulated as follows. By phosphorylation of various serine residues and by calcium. Its function is as follows. Phosphorylase b kinase catalyzes the phosphorylation of serine in certain substrates, including troponin I. The alpha chain may bind calmodulin. The polypeptide is Phosphorylase b kinase regulatory subunit alpha, skeletal muscle isoform (Phka1) (Rattus norvegicus (Rat)).